A 235-amino-acid chain; its full sequence is Probable transcriptional regulatory protein Ccur92_05350 (235 aa).

Belongs to the TACO1 family.

It is found in the cytoplasm. The protein is Probable transcriptional regulatory protein Ccur92_05350 of Campylobacter curvus (strain 525.92).